We begin with the raw amino-acid sequence, 353 residues long: MASADELDRREREILRALVQDYIHTGEPVASQPLLSRHELEWSPATVRSVMADLEALGFLEKPHASSGRIPTERGYRLFVDTMLKVRPPSVADRDRIERLAQAAPDVSSLIEGTADLLHSLSHHAGVVTTPRPQADPVRQLEFVRLRENRVLVVFVSEAGIVTNKLVQLEFAMEPAELERAAAYLNEKLHARADAAELAALRAAILTDMRADQSALHDLLQKALVLAEQSFAGTGVEKVVMEGESSFLDAPEFSDVQKARALLRGFAEKDRILRVLDRVLTAQEVQIFIGAESEFATVPDVSVVAAPYGRGDRVLGTLAVVGPTRMNYARVIPLVDLTARQISRALAALSEGG.

It belongs to the HrcA family.

Negative regulator of class I heat shock genes (grpE-dnaK-dnaJ and groELS operons). Prevents heat-shock induction of these operons. This Anaeromyxobacter dehalogenans (strain 2CP-1 / ATCC BAA-258) protein is Heat-inducible transcription repressor HrcA.